The following is a 305-amino-acid chain: Probable alpha-L-glutamate ligase (305 aa).

The ATP-grasp domain maps to 119 to 301 (LQVLAAQHIP…IAGLIIDYLL (183 aa)). ATP contacts are provided by residues Lys155, 192-193 (DF), Asp201, and 225-227 (RAN). Mg(2+) contacts are provided by Asp262, Glu274, and Asn276. Mn(2+) is bound by residues Asp262, Glu274, and Asn276.

It belongs to the RimK family. Mg(2+) serves as cofactor. It depends on Mn(2+) as a cofactor.

The protein is Probable alpha-L-glutamate ligase of Haemophilus ducreyi (strain 35000HP / ATCC 700724).